A 225-amino-acid chain; its full sequence is Single-pass membrane and coiled-coil domain-containing protein 3 (225 aa).

The stretch at 69–92 (IIQAMTKIQKELQKIDEALKDQLE) forms a coiled coil. The helical transmembrane segment at 155-175 (IGTSLLGSIGVAVLSLGIDMI) threads the bilayer. The stretch at 182–209 (AVERTQLQAAIKSYEKHLEEFKAASAKY) forms a coiled coil.

The protein localises to the membrane. In Mus musculus (Mouse), this protein is Single-pass membrane and coiled-coil domain-containing protein 3 (Smco3).